The following is a 356-amino-acid chain: S-adenosylmethionine:tRNA ribosyltransferase-isomerase (356 aa).

Belongs to the QueA family. As to quaternary structure, monomer.

It localises to the cytoplasm. It carries out the reaction 7-aminomethyl-7-carbaguanosine(34) in tRNA + S-adenosyl-L-methionine = epoxyqueuosine(34) in tRNA + adenine + L-methionine + 2 H(+). Its pathway is tRNA modification; tRNA-queuosine biosynthesis. In terms of biological role, transfers and isomerizes the ribose moiety from AdoMet to the 7-aminomethyl group of 7-deazaguanine (preQ1-tRNA) to give epoxyqueuosine (oQ-tRNA). The polypeptide is S-adenosylmethionine:tRNA ribosyltransferase-isomerase (Xanthomonas euvesicatoria pv. vesicatoria (strain 85-10) (Xanthomonas campestris pv. vesicatoria)).